Reading from the N-terminus, the 559-residue chain is Cytokine-like nuclear factor N-PAC (559 aa).

The PWWP domain maps to 9-70 (VNDLVWAKMK…ETQIKPYQEF (62 aa)). The disordered stretch occupies residues 106-137 (SEQDNRPDPDVEFNKLREGGTESGEETTVNNT). The segment covering 108 to 125 (QDNRPDPDVEFNKLREGG) has biased composition (basic and acidic residues). A dehydrogenase domain region spans residues 267–559 (RNIQASNLKF…SSAVYVRARF (293 aa)). Residues 277 to 291 (GFLG…MVKN) and K511 contribute to the NAD(+) site.

Belongs to the HIBADH-related family. NP60 subfamily. Binds to mononucleosomes.

The protein resides in the chromosome. Functionally, nucleosome-destabilizing factor that is recruited to genes during transcriptional activation and colocalizes with a subset of trimethylated 'Lys-36' histone H3 (H3K36me3)-enriched regions. In Aedes aegypti (Yellowfever mosquito), this protein is Cytokine-like nuclear factor N-PAC.